A 152-amino-acid chain; its full sequence is Ubiquitin-conjugating enzyme E2 1 (152 aa).

The region spanning 4 to 150 is the UBC core domain; the sequence is PARKRLMRDF…VRDVVEQSWT (147 aa). Catalysis depends on Cys-88, which acts as the Glycyl thioester intermediate. Residues 119-152 are disordered; it reads NSPANSEAARMYSESKREYNRRVRDVVEQSWTAD. Residues 131–145 are compositionally biased toward basic and acidic residues; it reads SESKREYNRRVRDVV.

Belongs to the ubiquitin-conjugating enzyme family. Ubiquitously expressed.

The enzyme catalyses S-ubiquitinyl-[E1 ubiquitin-activating enzyme]-L-cysteine + [E2 ubiquitin-conjugating enzyme]-L-cysteine = [E1 ubiquitin-activating enzyme]-L-cysteine + S-ubiquitinyl-[E2 ubiquitin-conjugating enzyme]-L-cysteine.. It participates in protein modification; protein ubiquitination. Its function is as follows. Accepts the ubiquitin from the E1 complex and catalyzes its covalent attachment to other proteins. This is Ubiquitin-conjugating enzyme E2 1 (UBC1) from Arabidopsis thaliana (Mouse-ear cress).